Reading from the N-terminus, the 34-residue chain is Photosystem II reaction center protein Psb30 (34 aa).

The helical transmembrane segment at valine 7–isoleucine 27 threads the bilayer.

The protein belongs to the Psb30/Ycf12 family. As to quaternary structure, PSII is composed of 1 copy each of membrane proteins PsbA, PsbB, PsbC, PsbD, PsbE, PsbF, PsbH, PsbI, PsbJ, PsbK, PsbL, PsbM, PsbT, PsbX, PsbY, PsbZ, Psb30/Ycf12, peripheral proteins of the oxygen-evolving complex and a large number of cofactors. It forms dimeric complexes.

Its subcellular location is the plastid. It localises to the chloroplast thylakoid membrane. In terms of biological role, a core subunit of photosystem II (PSII), probably helps stabilize the reaction center. This is Photosystem II reaction center protein Psb30 from Rhodomonas salina (Cryptomonas salina).